Here is a 66-residue protein sequence, read N- to C-terminus: Large ribosomal subunit protein bL35 (66 aa).

Basic residues predominate over residues 1 to 26 (MPKMKTHRGAAKRVKRTGSGKLKRSR). Residues 1–49 (MPKMKTHRGAAKRVKRTGSGKLKRSRAFTSHLFANKSTKQKRKLRKASL) are disordered.

It belongs to the bacterial ribosomal protein bL35 family.

This is Large ribosomal subunit protein bL35 from Staphylococcus saprophyticus subsp. saprophyticus (strain ATCC 15305 / DSM 20229 / NCIMB 8711 / NCTC 7292 / S-41).